We begin with the raw amino-acid sequence, 102 residues long: Small ribosomal subunit protein uS10 (102 aa).

It belongs to the universal ribosomal protein uS10 family. Part of the 30S ribosomal subunit.

Its function is as follows. Involved in the binding of tRNA to the ribosomes. The sequence is that of Small ribosomal subunit protein uS10 from Streptococcus thermophilus (strain ATCC BAA-250 / LMG 18311).